The chain runs to 131 residues: Glycine cleavage system H protein (131 aa).

The Lipoyl-binding domain occupies 24 to 106; the sequence is RAIVGISDHA…YGEGWIMVIE (83 aa). K65 carries the N6-lipoyllysine modification.

This sequence belongs to the GcvH family. The glycine cleavage system is composed of four proteins: P, T, L and H. (R)-lipoate serves as cofactor.

Its function is as follows. The glycine cleavage system catalyzes the degradation of glycine. The H protein shuttles the methylamine group of glycine from the P protein to the T protein. The polypeptide is Glycine cleavage system H protein (Xylella fastidiosa (strain 9a5c)).